The primary structure comprises 292 residues: Acetyl-coenzyme A carboxylase carboxyl transferase subunit beta (292 aa).

The CoA carboxyltransferase N-terminal domain maps to Leu-29–Asn-292. Residues Cys-33, Cys-36, Cys-52, and Cys-55 each coordinate Zn(2+). The C4-type zinc-finger motif lies at Cys-33–Cys-55.

It belongs to the AccD/PCCB family. In terms of assembly, acetyl-CoA carboxylase is a heterohexamer composed of biotin carboxyl carrier protein (AccB), biotin carboxylase (AccC) and two subunits each of ACCase subunit alpha (AccA) and ACCase subunit beta (AccD). Zn(2+) serves as cofactor.

The protein localises to the cytoplasm. The enzyme catalyses N(6)-carboxybiotinyl-L-lysyl-[protein] + acetyl-CoA = N(6)-biotinyl-L-lysyl-[protein] + malonyl-CoA. The protein operates within lipid metabolism; malonyl-CoA biosynthesis; malonyl-CoA from acetyl-CoA: step 1/1. Its function is as follows. Component of the acetyl coenzyme A carboxylase (ACC) complex. Biotin carboxylase (BC) catalyzes the carboxylation of biotin on its carrier protein (BCCP) and then the CO(2) group is transferred by the transcarboxylase to acetyl-CoA to form malonyl-CoA. The protein is Acetyl-coenzyme A carboxylase carboxyl transferase subunit beta of Prochlorococcus marinus (strain MIT 9515).